The sequence spans 541 residues: Chaperonin GroEL 2 (541 aa).

Residues 29 to 32 (TLGP), 86 to 90 (DGTTT), Gly413, 476 to 478 (NAA), and Asp492 contribute to the ATP site.

This sequence belongs to the chaperonin (HSP60) family. As to quaternary structure, forms a cylinder of 14 subunits composed of two heptameric rings stacked back-to-back. Interacts with the co-chaperonin GroES.

The protein resides in the secreted. Its subcellular location is the capsule. It is found in the cell surface. The protein localises to the cell wall. The catalysed reaction is ATP + H2O + a folded polypeptide = ADP + phosphate + an unfolded polypeptide.. Its function is as follows. Together with its co-chaperonin GroES, plays an essential role in assisting protein folding. The GroEL-GroES system forms a nano-cage that allows encapsulation of the non-native substrate proteins and provides a physical environment optimized to promote and accelerate protein folding. This is Chaperonin GroEL 2 from Mycobacterium ulcerans (strain Agy99).